The primary structure comprises 484 residues: tRNA sulfurtransferase (484 aa).

The region spanning 61-165 (ILLVELLGRI…NDKMMLIKAR (105 aa)) is the THUMP domain. ATP contacts are provided by residues 183 to 184 (LI), K265, G287, and Q296. A disulfide bridge connects residues C344 and C456. The Rhodanese domain occupies 404 to 484 (LSANDVILDI…DNVKVLNKIS (81 aa)). C456 serves as the catalytic Cysteine persulfide intermediate.

It belongs to the ThiI family.

The protein resides in the cytoplasm. It catalyses the reaction [ThiI sulfur-carrier protein]-S-sulfanyl-L-cysteine + a uridine in tRNA + 2 reduced [2Fe-2S]-[ferredoxin] + ATP + H(+) = [ThiI sulfur-carrier protein]-L-cysteine + a 4-thiouridine in tRNA + 2 oxidized [2Fe-2S]-[ferredoxin] + AMP + diphosphate. The catalysed reaction is [ThiS sulfur-carrier protein]-C-terminal Gly-Gly-AMP + S-sulfanyl-L-cysteinyl-[cysteine desulfurase] + AH2 = [ThiS sulfur-carrier protein]-C-terminal-Gly-aminoethanethioate + L-cysteinyl-[cysteine desulfurase] + A + AMP + 2 H(+). It participates in cofactor biosynthesis; thiamine diphosphate biosynthesis. Its function is as follows. Catalyzes the ATP-dependent transfer of a sulfur to tRNA to produce 4-thiouridine in position 8 of tRNAs, which functions as a near-UV photosensor. Also catalyzes the transfer of sulfur to the sulfur carrier protein ThiS, forming ThiS-thiocarboxylate. This is a step in the synthesis of thiazole, in the thiamine biosynthesis pathway. The sulfur is donated as persulfide by IscS. In Histophilus somni (strain 129Pt) (Haemophilus somnus), this protein is tRNA sulfurtransferase.